The chain runs to 172 residues: Myosin regulatory light polypeptide 9 (172 aa).

Residues 1–16 (MSSKRAKAKTTKKRPQ) are compositionally biased toward basic residues. The disordered stretch occupies residues 1–20 (MSSKRAKAKTTKKRPQRATS). Ser2 is subject to N-acetylserine. Thr19 carries the post-translational modification Phosphothreonine; by MLCK, CIT and ROCK2. Residue Ser20 is modified to Phosphoserine; by CDC42BP, CIT, MLCK, PAK1, ROCK1, ROCK2, DAPK1, DAPK2 and ZIPK/DAPK3. EF-hand domains follow at residues 29–64 (SQIQ…LGKN), 98–133 (DPED…MGDR), and 134–169 (FTDE…GAKD). Residues Asp42, Asn44, Asp46, and Asp53 each contribute to the Ca(2+) site.

As to quaternary structure, myosin is a hexamer of 2 heavy chains and 4 light chains: interacts with myosin heavy chain MYO19. Interacts with LUZP1; the interaction results in inhibition of phosphorylation of MYL9 by DAPK3. Phosphorylation increases the actin-activated myosin ATPase activity and thereby regulates the contractile activity. It is required to generate the driving force in the migration of the cells but not necessary for localization of myosin-2 at the leading edge. Phosphorylation is required for myotube formation. Phosphorylated by DAPK3; DAPK3-mediated phosphorylation is inhibited by LUZP1.

The protein localises to the cytoplasm. The protein resides in the cytoskeleton. It localises to the cell cortex. Its function is as follows. Myosin regulatory subunit that plays an important role in regulation of both smooth muscle and nonmuscle cell contractile activity via its phosphorylation. Implicated in cytokinesis, receptor capping, and cell locomotion. In myoblasts, regulates PIEZO1-dependent cortical actomyosin assembly involved in myotube formation. The polypeptide is Myosin regulatory light polypeptide 9 (Myl9) (Mus musculus (Mouse)).